The chain runs to 114 residues: UPF0342 protein PEPE_0673 (114 aa).

Belongs to the UPF0342 family.

The polypeptide is UPF0342 protein PEPE_0673 (Pediococcus pentosaceus (strain ATCC 25745 / CCUG 21536 / LMG 10740 / 183-1w)).